Here is a 314-residue protein sequence, read N- to C-terminus: Methionyl-tRNA formyltransferase (314 aa).

A (6S)-5,6,7,8-tetrahydrofolate-binding site is contributed by 113–116; that stretch reads SLLP.

It belongs to the Fmt family.

The enzyme catalyses L-methionyl-tRNA(fMet) + (6R)-10-formyltetrahydrofolate = N-formyl-L-methionyl-tRNA(fMet) + (6S)-5,6,7,8-tetrahydrofolate + H(+). In terms of biological role, attaches a formyl group to the free amino group of methionyl-tRNA(fMet). The formyl group appears to play a dual role in the initiator identity of N-formylmethionyl-tRNA by promoting its recognition by IF2 and preventing the misappropriation of this tRNA by the elongation apparatus. This Pseudomonas syringae pv. tomato (strain ATCC BAA-871 / DC3000) protein is Methionyl-tRNA formyltransferase.